Reading from the N-terminus, the 197-residue chain is UPF0215 protein MK0057 (197 aa).

The protein belongs to the UPF0215 family.

The chain is UPF0215 protein MK0057 from Methanopyrus kandleri (strain AV19 / DSM 6324 / JCM 9639 / NBRC 100938).